The following is a 1843-amino-acid chain: Cilia- and flagella-associated protein 44 (1843 aa).

The interval 1–86 (MKEPDDQDTS…PPVEVKEEPE (86 aa)) is disordered. Polar residues predominate over residues 29–39 (LKSSQDTTADS). Residues 41-58 (TDGEESYLGDDLDLDDMD) show a composition bias toward acidic residues. WD repeat units lie at residues 214–255 (GAEK…PILR), 258–297 (AFSQ…TGLK), 308–346 (TSTS…VELC), 353–390 (CHSG…TADV), 456–495 (FHSG…PLVH), 497–541 (KFKQ…GLTV), and 561–600 (PHTD…KPIG). Positions 701–726 (REAFGEEEIPEEETSEEGEEEEPPLP) are disordered. A compositionally biased stretch (acidic residues) spans 705–724 (GEEEIPEEETSEEGEEEEPP). 2 WD repeats span residues 790–829 (TEDN…PFLV) and 842–881 (NNYG…IVPK). Disordered stretches follow at residues 1040 to 1086 (YSKL…SVLE), 1266 to 1291 (QRKQ…SAGG), and 1488 to 1524 (KEVE…DDVF). Basic and acidic residues predominate over residues 1047–1071 (SQSERRQSKMERLEKEGPGKKESQR). Serine 1069 is modified (phosphoserine). Over residues 1072 to 1081 (DTGGSISLQE) the composition is skewed to polar residues. Residues 1492 to 1524 (GDADEDEESEESSEEESSLESDEDASGSEDDVF) are compositionally biased toward acidic residues. Coiled coils occupy residues 1548–1603 (RLDI…RLNE) and 1631–1665 (LVFS…CRER). The stretch at 1699 to 1744 (IDLEALQTLSVNTTLEELKIKKLRKELSNAKELRMWEEKIAQVRWD) is one WD 10 repeat.

It belongs to the CFAP44 family. Expressed in testis.

The protein resides in the cell projection. It localises to the cilium. Its subcellular location is the flagellum. The protein localises to the cytoplasm. It is found in the cytoskeleton. The protein resides in the flagellum axoneme. Flagellar protein involved in sperm flagellum axoneme organization and function. In Mus musculus (Mouse), this protein is Cilia- and flagella-associated protein 44.